Here is a 394-residue protein sequence, read N- to C-terminus: Upstream-binding factor 1-like protein 1 (394 aa).

The HMG box 1 DNA-binding region spans 101-169 (PKRPLTAYLR…DFQKKMRQFK (69 aa)). Over residues 167–180 (QFKKRHPVSGHPKK) the composition is skewed to basic residues. The segment at 167-197 (QFKKRHPVSGHPKKSVVPQSHPTKVPTKSQG) is disordered. Residues 183-197 (VPQSHPTKVPTKSQG) are compositionally biased toward polar residues. Residues 225-291 (RKPPMNAYHK…QYRVKLDLWL (67 aa)) constitute a DNA-binding region (HMG box 2). The interval 305–394 (AKATCGKRKN…SDSSSTDEDD (90 aa)) is disordered.

It localises to the cytoplasm. The protein resides in the nucleus. Its function is as follows. Essential for proliferation of the inner cell mass and trophectodermal cells in peri-implantation development. This chain is Upstream-binding factor 1-like protein 1, found in Mus musculus (Mouse).